We begin with the raw amino-acid sequence, 953 residues long: Catenin alpha-2 (953 aa).

Phosphothreonine is present on Thr632. A phosphoserine mark is found at Ser640, Ser651, and Ser901. A compositionally biased stretch (basic and acidic residues) spans 912–927 (EKKPLVKREKPEEFQT). Positions 912-939 (EKKPLVKREKPEEFQTRVRRGSQKKHIS) are disordered. Residues 928–938 (RVRRGSQKKHI) show a composition bias toward basic residues. Ser939 bears the Phosphoserine mark.

Belongs to the vinculin/alpha-catenin family. Interacts with CDH1 and CDH2. Interacts with ZNF639; recruits CTNNA2 to the nucleus. Interacts with F-actin. As to expression, expressed in neural tissues, with strongest expression in fetal and adult brain. Expressed in the developing cortical plate and marginal zone of 20-week-old human fetal brain.

The protein resides in the cell membrane. The protein localises to the cytoplasm. It is found in the cytoskeleton. It localises to the cell junction. Its subcellular location is the adherens junction. The protein resides in the cell projection. The protein localises to the axon. It is found in the nucleus. Functionally, may function as a linker between cadherin adhesion receptors and the cytoskeleton to regulate cell-cell adhesion and differentiation in the nervous system. Required for proper regulation of cortical neuronal migration and neurite growth. It acts as a negative regulator of Arp2/3 complex activity and Arp2/3-mediated actin polymerization. It thereby suppresses excessive actin branching which would impair neurite growth and stability. Regulates morphological plasticity of synapses and cerebellar and hippocampal lamination during development. Functions in the control of startle modulation. This is Catenin alpha-2 (CTNNA2) from Homo sapiens (Human).